Consider the following 235-residue polypeptide: Uridylate kinase (235 aa).

10-11 lines the ATP pocket; the sequence is GS. Residue Gly-45 coordinates UMP. ATP-binding residues include Gly-46 and Arg-50. UMP-binding positions include Asp-67 and 115-121; that span reads VTPGQTT. Positions 141, 147, and 150 each coordinate ATP.

It belongs to the UMP kinase family. In terms of assembly, homohexamer.

It localises to the cytoplasm. It catalyses the reaction UMP + ATP = UDP + ADP. It functions in the pathway pyrimidine metabolism; CTP biosynthesis via de novo pathway; UDP from UMP (UMPK route): step 1/1. Its activity is regulated as follows. Inhibited by UTP. In terms of biological role, catalyzes the reversible phosphorylation of UMP to UDP. In Methanocorpusculum labreanum (strain ATCC 43576 / DSM 4855 / Z), this protein is Uridylate kinase.